A 218-amino-acid chain; its full sequence is ATP-dependent dethiobiotin synthetase BioD (218 aa).

An ATP-binding site is contributed by 10 to 15 (NAGKTT). Thr14 provides a ligand contact to Mg(2+). Lys35 is a catalytic residue. Thr39 is a substrate binding site. Positions 52 and 116 each coordinate Mg(2+). Residues 116–119 (EGAG) and 176–177 (LR) contribute to the ATP site.

It belongs to the dethiobiotin synthetase family. In terms of assembly, homodimer. Requires Mg(2+) as cofactor.

It localises to the cytoplasm. It carries out the reaction (7R,8S)-7,8-diammoniononanoate + CO2 + ATP = (4R,5S)-dethiobiotin + ADP + phosphate + 3 H(+). It functions in the pathway cofactor biosynthesis; biotin biosynthesis; biotin from 7,8-diaminononanoate: step 1/2. In terms of biological role, catalyzes a mechanistically unusual reaction, the ATP-dependent insertion of CO2 between the N7 and N8 nitrogen atoms of 7,8-diaminopelargonic acid (DAPA, also called 7,8-diammoniononanoate) to form a ureido ring. This chain is ATP-dependent dethiobiotin synthetase BioD, found in Helicobacter pylori (strain Shi470).